Reading from the N-terminus, the 177-residue chain is Ribulose bisphosphate carboxylase small subunit, chloroplastic (177 aa).

A chloroplast-targeting transit peptide spans 1–55; it reads MASLMSNAAVVTASTAAQANMVAPFSGLKSTSAFPVSRKSNVDITSLATNGGRVN.

Belongs to the RuBisCO small chain family. Heterohexadecamer of 8 large and 8 small subunits.

The protein localises to the plastid. It localises to the chloroplast. RuBisCO catalyzes two reactions: the carboxylation of D-ribulose 1,5-bisphosphate, the primary event in carbon dioxide fixation, as well as the oxidative fragmentation of the pentose substrate. Both reactions occur simultaneously and in competition at the same active site. Although the small subunit is not catalytic it is essential for maximal activity. This chain is Ribulose bisphosphate carboxylase small subunit, chloroplastic, found in Silene latifolia subsp. alba (White campion).